Consider the following 448-residue polypeptide: RuvB-like 2 (448 aa).

73 to 80 is a binding site for ATP; the sequence is GEPGAGKT.

The protein belongs to the RuvB family. In terms of assembly, forms homohexameric rings. May form a dodecamer with ruvb-1 made of two stacked hexameric rings. Expressed in gonadal cells.

The protein localises to the cytoplasm. It is found in the nucleus. The enzyme catalyses ATP + H2O = ADP + phosphate + H(+). Functionally, possesses single-stranded DNA-stimulated ATPase and ATP-dependent DNA helicase (5' to 3') activity suggesting a role in nuclear processes such as recombination and transcription. May participate in several chromatin remodeling complexes that mediate the ATP-dependent exchange of histones and remodel chromatin by shifting nucleosomes. Involvement in these complexes is likely required for transcriptional activation of selected genes and DNA repair in response to DNA damage. Has a role in gonadal development. Involved in the endoplasmic reticulum (ER)-associated degradation (ERAD) pathway where it negatively regulates expression of ER stress response genes. Specifically, negatively controls the expression of ER homeostasis regulator ckb-2 in a cdc-48.1/2-dependent manner. This is RuvB-like 2 from Caenorhabditis elegans.